The chain runs to 949 residues: L-fucokinase/L-fucose-1-P guanylyltransferase (949 aa).

A fucose-1-phosphate guanylyltransferase region spans residues 25–191 (DWFCTSDPVG…DFMLQKPSLA (167 aa)). An L-fucokinase region spans residues 559–949 (LLRDGLLDGI…SDKGFQVSRS (391 aa)).

Belongs to the GHMP kinase family. As to quaternary structure, homotetramer. Mn(2+) serves as cofactor. Requires Mg(2+) as cofactor.

It carries out the reaction L-fucose + ATP = beta-L-fucose 1-phosphate + ADP + H(+). The catalysed reaction is beta-L-fucose 1-phosphate + GTP + H(+) = GDP-beta-L-fucose + diphosphate. In terms of biological role, bifunctional enzyme involved in the salvage pathway of GDP-fucose synthesis. Catalyzes two successive reactions, the ATP-dependent phosphorylation of L-fucose to L-fucose 1-phosphate, and its guanylylation to GDP-L-fucose. GDP-fucose is an important fucose donor in the process of fucosylated oligosaccharides formation. The polypeptide is L-fucokinase/L-fucose-1-P guanylyltransferase (Bacteroides fragilis).